Here is a 621-residue protein sequence, read N- to C-terminus: Growth factor receptor-bound protein 10 (621 aa).

Polar residues-rich tracts occupy residues 1 to 23 (MNND…SDTD) and 33 to 59 (HASN…QRSQ). Positions 1-118 (MNNDINSSVE…PSQPPAKHCG (118 aa)) are disordered. A phosphoserine mark is found at Ser50 and Ser96. Over residues 95–112 (GSPPSVAPSSLPPPPSQP) the composition is skewed to pro residues. In terms of domain architecture, Ras-associating spans 194-278 (LRKDVKVFSE…SKFLFRKNYA (85 aa)). Residues 318 to 427 (CPEIQGFLQV…WMTAFRLLKY (110 aa)) form the PH domain. Ser455 bears the Phosphoserine; by MTOR and PKB/AKT1 mark. 2 positions are modified to phosphoserine: Ser458 and Ser503. In terms of domain architecture, SH2 spans 520-601 (WFHGRISREE…SDLIQLVDFY (82 aa)).

It belongs to the GRB7/10/14 family. Interacts with ligand-activated tyrosine kinase receptors, including FGFR1, INSR, IGF1R, MET and PDGFRB in a phosphotyrosine-dependent manner through the SH2 domain. Poorly binds to the EGFR. Directly interacts with MAP3K14/NIK and is recruited to the EGFR-ERBB2 complex. Interacts with GIGYF1/PERQ1 and GIGYF2/TNRC15. When unphosphorylated, interacts with AKT1 and when phosphorylated with YWHAE/14-3-3 epsilon. Interacts with NEDD4. Interacts with LRP6, thus interfering with the binding of AXIN1 to LRP6. Binds to activated NRAS. Phosphorylated on serine residues upon EGF, FGF and PDGF stimulation. As to expression, widely expressed.

The protein localises to the cytoplasm. With respect to regulation, phosphorylation by mTORC1 stabilizes and activates GRB10 constituting a feedback pathway by which mTORC1 inhibits INSR-dependent signaling. Adapter protein which modulates coupling of a number of cell surface receptor kinases with specific signaling pathways. Binds to, and suppress signals from, activated receptors tyrosine kinases, including the insulin (INSR) and insulin-like growth factor (IGF1R) receptors. The inhibitory effect can be achieved by 2 mechanisms: interference with the signaling pathway and increased receptor degradation. Delays and reduces AKT1 phosphorylation in response to insulin stimulation. Blocks association between INSR and IRS1 and IRS2 and prevents insulin-stimulated IRS1 and IRS2 tyrosine phosphorylation. Recruits NEDD4 to IGF1R, leading to IGF1R ubiquitination, increased internalization and degradation by both the proteasomal and lysosomal pathways. A similar role in the mediation of ubiquitination also has been suggested with INSR. Negatively regulates Wnt signaling by interacting with LRP6 intracellular portion and interfering with the binding of AXIN1 to LRP6. Positive regulator of the KDR/VEGFR-2 signaling pathway. May inhibit NEDD4-mediated degradation of KDR/VEGFR-2. The protein is Growth factor receptor-bound protein 10 (Grb10) of Mus musculus (Mouse).